Reading from the N-terminus, the 468-residue chain is Mitochondrial dynamics protein MID51 (468 aa).

At 1 to 29 (MAGVNGDRKGKKDDNGLGTAIDFVLSNAK) the chain is on the mitochondrial intermembrane side. A helical transmembrane segment spans residues 30-47 (LVLGVGGAAMLGIATLAV). Over 48–468 (KRMYDRALSA…SDPESLLRTV (421 aa)) the chain is Cytoplasmic. The segment at 50 to 196 (MYDRALSAPS…LSGSLYDDLQ (147 aa)) is dimerization. The tract at residues 56–123 (SAPSSPTKAD…RGLARGGRPA (68 aa)) is disordered. Positions 91–108 (QNVSRSLQTLPTSSSSFK) are enriched in polar residues. The tract at residues 161 to 170 (AALDICAELR) is important for interaction with DNM1L. Positions 188, 190, and 202 each coordinate ADP. The segment at 235–244 (RRENLEYFPR) is important for interaction with DNM1L. ADP contacts are provided by Ser-344, Arg-346, and Lys-372.

Belongs to the MID49/MID51 family. Homodimer.

The protein localises to the mitochondrion outer membrane. Its function is as follows. Mitochondrial outer membrane protein which regulates mitochondrial fission/fusion dynamics. Promotes the recruitment and association of the fission mediator dynamin-related protein 1 (DNM1L) to the mitochondrial surface independently of the mitochondrial fission FIS1 and MFF proteins. Regulates DNM1L GTPase activity and DNM1L oligomerization. The protein is Mitochondrial dynamics protein MID51 (mief1) of Danio rerio (Zebrafish).